The following is a 289-amino-acid chain: Cell division protein ZipA (289 aa).

A topological domain (periplasmic) is located at residue methionine 1. The helical transmembrane segment at 2-22 (EIGLREWLIVIGIIVIAGILF) threads the bilayer. Topologically, residues 23-289 (DGWRRMRGSK…ERRALTQRRG (267 aa)) are cytoplasmic. Residues 48-141 (DEEETTSAEV…KPAQRITEDK (94 aa)) form a disordered region. 3 stretches are compositionally biased toward basic and acidic residues: residues 64–77 (LDTH…EHDL), 85–106 (REGK…KDEP), and 123–141 (GRDD…TEDK).

This sequence belongs to the ZipA family. In terms of assembly, interacts with FtsZ via their C-terminal domains.

The protein localises to the cell inner membrane. Functionally, essential cell division protein that stabilizes the FtsZ protofilaments by cross-linking them and that serves as a cytoplasmic membrane anchor for the Z ring. Also required for the recruitment to the septal ring of downstream cell division proteins. This Pseudomonas savastanoi pv. phaseolicola (strain 1448A / Race 6) (Pseudomonas syringae pv. phaseolicola (strain 1448A / Race 6)) protein is Cell division protein ZipA.